The primary structure comprises 393 residues: Phosphoglycerate kinase (393 aa).

Residues 21–23 (DMN), Arg-36, 59–62 (HLGR), Arg-114, and Arg-147 contribute to the substrate site. Residues Lys-198, Glu-320, and 346-349 (GGDT) contribute to the ATP site.

This sequence belongs to the phosphoglycerate kinase family. In terms of assembly, monomer.

It localises to the cytoplasm. It carries out the reaction (2R)-3-phosphoglycerate + ATP = (2R)-3-phospho-glyceroyl phosphate + ADP. It functions in the pathway carbohydrate degradation; glycolysis; pyruvate from D-glyceraldehyde 3-phosphate: step 2/5. This is Phosphoglycerate kinase from Thiobacillus denitrificans (strain ATCC 25259 / T1).